The sequence spans 527 residues: 4-alpha-glucanotransferase (527 aa).

It belongs to the disproportionating enzyme family.

It is found in the cytoplasm. It catalyses the reaction Transfers a segment of a (1-&gt;4)-alpha-D-glucan to a new position in an acceptor, which may be glucose or a (1-&gt;4)-alpha-D-glucan.. The sequence is that of 4-alpha-glucanotransferase (malQ) from Chlamydia muridarum (strain MoPn / Nigg).